The chain runs to 876 residues: Alanine--tRNA ligase (876 aa).

Zn(2+) contacts are provided by His-568, His-572, Cys-670, and His-674.

It belongs to the class-II aminoacyl-tRNA synthetase family. Zn(2+) is required as a cofactor.

The protein resides in the cytoplasm. The catalysed reaction is tRNA(Ala) + L-alanine + ATP = L-alanyl-tRNA(Ala) + AMP + diphosphate. Catalyzes the attachment of alanine to tRNA(Ala) in a two-step reaction: alanine is first activated by ATP to form Ala-AMP and then transferred to the acceptor end of tRNA(Ala). Also edits incorrectly charged Ser-tRNA(Ala) and Gly-tRNA(Ala) via its editing domain. This chain is Alanine--tRNA ligase, found in Anaplasma phagocytophilum (strain HZ).